The chain runs to 397 residues: P2X purinoceptor 3 (397 aa).

Over 1–20 (MNCISDFFTYETTKSVVVKS) the chain is Cytoplasmic. A helical membrane pass occupies residues 21–43 (WTIGIINRVVQLLIISYFVGWVF). The Extracellular portion of the chain corresponds to 44–322 (LHEKAYQVRD…AGKFNIIPTI (279 aa)). ATP-binding residues include Lys63 and Lys65. Intrachain disulfides connect Cys107/Cys153, Cys116/Cys137, and Cys122/Cys147. Glu111 is a Mg(2+) binding site. Residue Asn139 is glycosylated (N-linked (GlcNAc...) asparagine). Asp158 is a Mg(2+) binding site. Ca(2+) is bound at residue Asp158. Asn170 carries N-linked (GlcNAc...) asparagine glycosylation. Residue Thr172 participates in ATP binding. N-linked (GlcNAc...) asparagine glycosylation occurs at Asn194. 2 disulfide bridges follow: Cys203–Cys213 and Cys247–Cys256. Residues Ser275, Asn279, and Arg281 each coordinate ATP. An N-linked (GlcNAc...) asparagine glycan is attached at Asn290. Lys299 contributes to the ATP binding site. The helical transmembrane segment at 323 to 341 (ISSVAAFTSVGVGTVLCDI) threads the bilayer. The Cytoplasmic segment spans residues 342–397 (ILLNFLKGADQYKAKKFEEVNETTLKIAALTNPVYPSDQTTAEKQSTDSGAFSIGH). A compositionally biased stretch (polar residues) spans 378-391 (SDQTTAEKQSTDSG). The segment at 378–397 (SDQTTAEKQSTDSGAFSIGH) is disordered.

It belongs to the P2X receptor family. Homotrimer. Forms heterotrimer with P2RX2. Heterotrimeric P2RX2/3 has a ligand dose-response profile that is distinct from either homotrimeric P2RX2 or P2RX3.

Its subcellular location is the cell membrane. The catalysed reaction is Ca(2+)(in) = Ca(2+)(out). The enzyme catalyses Na(+)(in) = Na(+)(out). Its activity is regulated as follows. Has high sensitivity to ATP. Fast activation by external ATP. Exhibits rapid desensitization. Sensitives to the ATP agonist:alpha/beta-methylene-ATP. Subject to allosteric inhibition by AF-219. Mg(2+) and Ca(2+) slow deactivation of P2RX3. Its function is as follows. Extracellular ATP-activated non-selective cation channel. Plays particularly important role in sensory neurons where its activation is critical for gustatory, nociceptive responses, visceral reflexes and sensory hypersensitization. In Homo sapiens (Human), this protein is P2X purinoceptor 3 (P2RX3).